We begin with the raw amino-acid sequence, 256 residues long: Small ribosomal subunit protein eS1 (256 aa).

A compositionally biased stretch (basic residues) spans 1–18 (MAVGKNKRLSKGKKGLKK). The disordered stretch occupies residues 1 to 22 (MAVGKNKRLSKGKKGLKKKTQD). An N-acetylalanine; partial modification is found at alanine 2.

It belongs to the eukaryotic ribosomal protein eS1 family. In terms of assembly, component of the small ribosomal subunit. Mature ribosomes consist of a small (40S) and a large (60S) subunit. The 40S subunit contains about 33 different proteins and 1 molecule of RNA (18S). The 60S subunit contains about 49 different proteins and 3 molecules of RNA (25S, 5.8S and 5S).

Its subcellular location is the cytoplasm. The chain is Small ribosomal subunit protein eS1 from Pyricularia oryzae (strain Y34) (Rice blast fungus).